The primary structure comprises 482 residues: 23S rRNA (uracil(1939)-C(5))-methyltransferase RlmD (482 aa).

[4Fe-4S] cluster-binding residues include Cys85, Cys95, Cys98, and Cys177. S-adenosyl-L-methionine is bound by residues Gln285, Phe314, Asn319, Glu335, Asn370, and Asp391. Cys438 (nucleophile) is an active-site residue.

Belongs to the class I-like SAM-binding methyltransferase superfamily. RNA M5U methyltransferase family. RlmD subfamily.

The catalysed reaction is uridine(1939) in 23S rRNA + S-adenosyl-L-methionine = 5-methyluridine(1939) in 23S rRNA + S-adenosyl-L-homocysteine + H(+). Functionally, catalyzes the formation of 5-methyl-uridine at position 1939 (m5U1939) in 23S rRNA. The chain is 23S rRNA (uracil(1939)-C(5))-methyltransferase RlmD from Acidovorax sp. (strain JS42).